The primary structure comprises 159 residues: U1 small nuclear ribonucleoprotein C (159 aa).

The Matrin-type zinc finger occupies Phe4–Asp36. The interval Lys61 to Gly99 is disordered. Pro residues-rich tracts occupy residues Pro63 to Gly74 and Gly84 to Gly99.

The protein belongs to the U1 small nuclear ribonucleoprotein C family. Component of the U1 snRNP. The U1 snRNP is composed of the U1 snRNA and the 7 core Sm proteins snrpb, snrpd1, snrpd2, snrpd3, snrpe, snrpf and snrpg that assemble in a heptameric protein ring on the Sm site of the small nuclear RNA to form the core snRNP, and at least 3 U1 snRNP-specific proteins snrnp70/U1-70K, snrpa/U1-A and snrpc/U1-C. snrpc/U1-C interacts with U1 snRNA and the 5' splice-site region of the pre-mRNA.

It is found in the nucleus. Functionally, component of the spliceosomal U1 snRNP, which is essential for recognition of the pre-mRNA 5' splice-site and the subsequent assembly of the spliceosome. snrpc/U1-C is directly involved in initial 5' splice-site recognition for both constitutive and regulated alternative splicing. The interaction with the 5' splice-site seems to precede base-pairing between the pre-mRNA and the U1 snRNA. Stimulates commitment or early (E) complex formation by stabilizing the base pairing of the 5' end of the U1 snRNA and the 5' splice-site region. The polypeptide is U1 small nuclear ribonucleoprotein C (Danio rerio (Zebrafish)).